The following is a 1258-amino-acid chain: Plasma membrane calcium-transporting ATPase 3 (1258 aa).

Residues 1 to 19 (MGDMANSSIEFHPKPQQQR) are compositionally biased toward polar residues. Positions 1–22 (MGDMANSSIEFHPKPQQQREVP) are disordered. Residues 1 to 97 (MGDMANSSIE…NFIPPKQPKT (97 aa)) lie on the Cytoplasmic side of the membrane. The residue at position 8 (serine 8) is a Phosphoserine. The helical transmembrane segment at 98-118 (FLQLVWEALQDVTLIILEVAA) threads the bilayer. The Extracellular segment spans residues 119-155 (IVSLGLSFYAPPGEESEACGNVSGGAEDEGEAEAGWI). Residues 156-176 (EGAAILLSVICVVLVTAFNDW) traverse the membrane as a helical segment. Over 177 to 364 (SKEKQFRGLQ…KEKSVLQGKL (188 aa)) the chain is Cytoplasmic. Disordered regions lie at residues 298 to 328 (EEEK…GAVA) and 335 to 354 (KSAE…NVPK). 2 stretches are compositionally biased toward basic and acidic residues: residues 299–308 (EEKKDKKGKQ) and 342–354 (MEER…NVPK). A helical membrane pass occupies residues 365-384 (TKLAVQIGKAGLVMSAITVI). The Extracellular portion of the chain corresponds to 385–417 (ILVLYFVIETFVVDGRVWLAECTPVYVQYFVKF). A helical transmembrane segment spans residues 418–435 (FIIGVTVLVVAVPEGLPL). Topologically, residues 436–849 (AVTISLAYSV…MWGRNVYDSI (414 aa)) are cytoplasmic. The active-site 4-aspartylphosphate intermediate is aspartate 473. Mg(2+)-binding residues include aspartate 794 and aspartate 798. The chain crosses the membrane as a helical span at residues 850-869 (SKFLQFQLTVNVVAVIVAFT). Over 870 to 879 (GACITQDSPL) the chain is Extracellular. Residues 880–900 (KAVQMLWVNLIMDTFASLALA) form a helical membrane-spanning segment. Over 901 to 920 (TEPPTESLLLRKPYGRDKPL) the chain is Cytoplasmic. Residues 921–943 (ISRTMMKNILGHAVYQLTIIFTL) form a helical membrane-spanning segment. At 944–961 (LFVGELFFDIDSGRNAPL) the chain is on the extracellular side. The helical transmembrane segment at 962–983 (HSPPSEHYTIIFNTFVMMQLFN) threads the bilayer. Residues 984–1002 (EINARKIHGERNVFDGIFS) are Cytoplasmic-facing. A helical transmembrane segment spans residues 1003–1024 (NPIFCTIVLGTFGIQIVIVQFG). The Extracellular portion of the chain corresponds to 1025–1034 (GKPFSCSPLS). The helical transmembrane segment at 1035–1056 (TEQWLWCLFVGVGELVWGQVIA) threads the bilayer. Residues 1057–1258 (TIPTSQLKCL…SPLHSMETSL (202 aa)) are Cytoplasmic-facing. Threonine 1079 is modified (phosphothreonine). Residues 1097–1114 (LRRGQILWFRGLNRIQTQ) are calmodulin-binding subdomain A. Position 1113 is a phosphothreonine; by PKC (threonine 1113). Positions 1115–1124 (MEVVSTFKRS) are calmodulin-binding subdomain B. At serine 1126 the chain carries Phosphoserine. The disordered stretch occupies residues 1204 to 1258 (ENEERLRAPPPPPPNQNNNAIDSGIYLTTHATKSATSSAFSSRPGSPLHSMETSL). Residues 1231–1245 (TTHATKSATSSAFSS) are compositionally biased toward low complexity.

This sequence belongs to the cation transport ATPase (P-type) (TC 3.A.3) family. Type IIB subfamily. Interacts with PDZD11. Interacts (via N-terminus) with YWHAE. Expressed predominantly in brain and skeletal muscle. Expressed in the molecular layer of the cerebellar cortex, in particular in granule cells (at protein level). Expressed in aldosterone producing glomerulosa cells of adrenal glands (at protein level). Detected at low levels in various tissues including testis, stomach, small intestine, and large intestine. As to expression, most abundant form in brain and most other tissues. In terms of tissue distribution, most abundant form in skeletal muscle and is also found in brain and at low levels in testis and kidney.

It localises to the cell membrane. It is found in the presynaptic cell membrane. The enzyme catalyses Ca(2+)(in) + ATP + H2O = Ca(2+)(out) + ADP + phosphate + H(+). Its function is as follows. ATP-driven Ca(2+) ion pump involved in the maintenance of basal intracellular Ca(2+) levels at the presynaptic terminals. Uses ATP as an energy source to transport cytosolic Ca(2+) ions across the plasma membrane to the extracellular compartment. May counter-transport protons, but the mechanism and the stoichiometry of this Ca(2+)/H(+) exchange remains to be established. In Rattus norvegicus (Rat), this protein is Plasma membrane calcium-transporting ATPase 3 (Atp2b3).